A 776-amino-acid polypeptide reads, in one-letter code: Glucocorticoid receptor (776 aa).

3 disordered regions span residues 1–25, 47–86, and 394–415; these read MDPK…YNDK, SCPT…PQPD, and SSPG…STGP. The tract at residues 1–419 is modulating; it reads MDPKDLLKPS…STSTGPPPKL (419 aa). The span at 47 to 83 shows a compositional bias: polar residues; it reads SCPTSTASQSNTRQQQHFQKQLTATGDSTNGLNNNVP. The segment covering 403–413 has biased composition (low complexity); it reads SPSPSTSSTST. 2 NR C4-type zinc fingers span residues 420–440 and 456–480; these read CLVC…CGSC and CAGR…YRKC. Residues 420–485 constitute a DNA-binding region (nuclear receptor); the sequence is CLVCSDEASG…RYRKCLQAGM (66 aa). Residues 486–522 are hinge; the sequence is NLEARKTKKKIKGIQQSTTATARESPETSMTRTLVPA. Positions 523 to 757 constitute an NR LBD domain; sequence SVAQLTPTLI…FPDMLSEIIS (235 aa).

It belongs to the nuclear hormone receptor family. NR3 subfamily. In terms of assembly, heteromultimeric cytoplasmic complex with HSP90. Upon ligand binding the complex undergoes a conformation change and moves to the nucleus, where it dissociates. Binds to DNA as a homodimer, and as heterodimer with NR3C2. Interaction with numerous other transcription factors modulates transcription activation. Expressed in liver with relative abundance.

The protein localises to the cytoplasm. The protein resides in the nucleus. It localises to the mitochondrion. Its subcellular location is the cytoskeleton. It is found in the spindle. The protein localises to the microtubule organizing center. The protein resides in the centrosome. Its function is as follows. Receptor for glucocorticoids (GC). Has a dual mode of action: as a transcription factor that binds to glucocorticoid response elements (GRE), both for nuclear and mitochondrial DNA, and as a modulator of other transcription factors. Affects inflammatory responses, cellular proliferation and differentiation in target tissues. Involved in chromatin remodeling. Plays a role in rapid mRNA degradation by binding to the 5' UTR of target mRNAs and interacting with PNRC2 in a ligand-dependent manner which recruits the RNA helicase UPF1 and the mRNA-decapping enzyme DCP1A, leading to RNA decay. Could act as a coactivator for STAT5-dependent transcription upon growth hormone (GH) stimulation and could reveal an essential role of hepatic GR in the control of body growth. Mediates glucocorticoid-induced apoptosis. Promotes accurate chromosome segregation during mitosis. May act as a tumor suppressor. May play a negative role in adipogenesis through the regulation of lipolytic and antilipogenic gene expression. The protein is Glucocorticoid receptor (nr3c1) of Xenopus laevis (African clawed frog).